Reading from the N-terminus, the 467-residue chain is Cysteine--tRNA ligase (467 aa).

A Zn(2+)-binding site is contributed by Cys-28. The short motif at 30 to 40 (ITAYDYSHIGH) is the 'HIGH' region element. Zn(2+)-binding residues include Cys-211, His-236, and Glu-240. Positions 268 to 272 (KMSKS) match the 'KMSKS' region motif. Residue Lys-271 participates in ATP binding.

It belongs to the class-I aminoacyl-tRNA synthetase family. Zn(2+) is required as a cofactor.

Its subcellular location is the cytoplasm. The enzyme catalyses tRNA(Cys) + L-cysteine + ATP = L-cysteinyl-tRNA(Cys) + AMP + diphosphate. This is Cysteine--tRNA ligase (cysS) from Archaeoglobus fulgidus (strain ATCC 49558 / DSM 4304 / JCM 9628 / NBRC 100126 / VC-16).